The primary structure comprises 938 residues: Isoleucine--tRNA ligase (938 aa).

The 'HIGH' region motif lies at 58–68 (PYANGSIHIGH). Glu561 contributes to the L-isoleucyl-5'-AMP binding site. The 'KMSKS' region motif lies at 602 to 606 (KMSKS). Lys605 contacts ATP. Zn(2+) contacts are provided by Cys901, Cys904, Cys921, and Cys924.

It belongs to the class-I aminoacyl-tRNA synthetase family. IleS type 1 subfamily. Monomer. It depends on Zn(2+) as a cofactor.

The protein resides in the cytoplasm. It catalyses the reaction tRNA(Ile) + L-isoleucine + ATP = L-isoleucyl-tRNA(Ile) + AMP + diphosphate. Catalyzes the attachment of isoleucine to tRNA(Ile). As IleRS can inadvertently accommodate and process structurally similar amino acids such as valine, to avoid such errors it has two additional distinct tRNA(Ile)-dependent editing activities. One activity is designated as 'pretransfer' editing and involves the hydrolysis of activated Val-AMP. The other activity is designated 'posttransfer' editing and involves deacylation of mischarged Val-tRNA(Ile). This is Isoleucine--tRNA ligase from Erwinia tasmaniensis (strain DSM 17950 / CFBP 7177 / CIP 109463 / NCPPB 4357 / Et1/99).